We begin with the raw amino-acid sequence, 123 residues long: Fluoride-specific ion channel FluC (123 aa).

The next 4 helical transmembrane spans lie at 7-27, 39-59, 68-88, and 101-121; these read LAVA…SGLL, MVNG…FWGF, FLGT…YETF, and LNVA…FLLA. Residues Gly75 and Ser78 each contribute to the Na(+) site.

Belongs to the fluoride channel Fluc/FEX (TC 1.A.43) family.

The protein localises to the cell membrane. It catalyses the reaction fluoride(in) = fluoride(out). Its activity is regulated as follows. Na(+) is not transported, but it plays an essential structural role and its presence is essential for fluoride channel function. Functionally, fluoride-specific ion channel. Important for reducing fluoride concentration in the cell, thus reducing its toxicity. In Thermococcus gammatolerans (strain DSM 15229 / JCM 11827 / EJ3), this protein is Fluoride-specific ion channel FluC.